A 304-amino-acid polypeptide reads, in one-letter code: Acetylglutamate kinase (304 aa).

Substrate-binding positions include 72–73, R94, and N199; that span reads GG.

The protein belongs to the acetylglutamate kinase family. ArgB subfamily.

Its subcellular location is the cytoplasm. It carries out the reaction N-acetyl-L-glutamate + ATP = N-acetyl-L-glutamyl 5-phosphate + ADP. It participates in amino-acid biosynthesis; L-arginine biosynthesis; N(2)-acetyl-L-ornithine from L-glutamate: step 2/4. In terms of biological role, catalyzes the ATP-dependent phosphorylation of N-acetyl-L-glutamate. This is Acetylglutamate kinase from Methylobacterium nodulans (strain LMG 21967 / CNCM I-2342 / ORS 2060).